A 145-amino-acid polypeptide reads, in one-letter code: Photosystem I reaction center subunit XI (145 aa).

The next 3 membrane-spanning stretches (helical) occupy residues 48–68 (LEIGMAHGYFLIGPFYILGPL), 75–95 (LLVGLFSAFGLILILTLGLTI), and 125–145 (IGAFGGASVAYVLLDNISFFA).

The protein belongs to the PsaL family.

It localises to the plastid. It is found in the chloroplast thylakoid membrane. The polypeptide is Photosystem I reaction center subunit XI (Emiliania huxleyi (Coccolithophore)).